A 447-amino-acid chain; its full sequence is Tubulin beta chain (447 aa).

The GTP site is built by Gln-11, Glu-69, Ser-138, Gly-142, Thr-143, Gly-144, Asn-204, and Asn-226. Glu-69 provides a ligand contact to Mg(2+). The segment at 421–447 is disordered; the sequence is EYQQYQDASISEGEEEYEEEAPMEPEE. Over residues 432–447 the composition is skewed to acidic residues; sequence EGEEEYEEEAPMEPEE.

It belongs to the tubulin family. Dimer of alpha and beta chains. A typical microtubule is a hollow water-filled tube with an outer diameter of 25 nm and an inner diameter of 15 nM. Alpha-beta heterodimers associate head-to-tail to form protofilaments running lengthwise along the microtubule wall with the beta-tubulin subunit facing the microtubule plus end conferring a structural polarity. Microtubules usually have 13 protofilaments but different protofilament numbers can be found in some organisms and specialized cells. Mg(2+) serves as cofactor.

Its subcellular location is the cytoplasm. It localises to the cytoskeleton. Functionally, tubulin is the major constituent of microtubules, a cylinder consisting of laterally associated linear protofilaments composed of alpha- and beta-tubulin heterodimers. Microtubules grow by the addition of GTP-tubulin dimers to the microtubule end, where a stabilizing cap forms. Below the cap, tubulin dimers are in GDP-bound state, owing to GTPase activity of alpha-tubulin. The protein is Tubulin beta chain of Rhynchosporium secalis (Barley scald fungus).